The primary structure comprises 1344 residues: Xanthine dehydrogenase (1344 aa).

The 88-residue stretch at 9–96 folds into the 2Fe-2S ferredoxin-type domain; the sequence is SVLVFFVNGK…GCAVTTVEGI (88 aa). Positions 48, 53, 56, 78, 118, 121, 153, and 155 each coordinate [2Fe-2S] cluster. An FAD-binding PCMH-type domain is found at 236–425; that stretch reads FSSERVTWYR…LGIHFQKTTP (190 aa). FAD is bound by residues 264–271, F344, 354–358, D367, L415, and K433; these read LVVGNTEV and CLGGN. Mo-molybdopterin contacts are provided by Q781 and F812. The substrate site is built by E816 and R894. R926 contributes to the Mo-molybdopterin binding site. F928 is a substrate binding site. A1093 lines the Mo-molybdopterin pocket. E1276 serves as the catalytic Proton acceptor.

The protein belongs to the xanthine dehydrogenase family. In terms of assembly, homodimer. The cofactor is FAD. Mo-molybdopterin is required as a cofactor. Requires [2Fe-2S] cluster as cofactor.

Its subcellular location is the peroxisome. It carries out the reaction xanthine + NAD(+) + H2O = urate + NADH + H(+). The catalysed reaction is hypoxanthine + NAD(+) + H2O = xanthine + NADH + H(+). Key enzyme in purine degradation. Catalyzes the oxidation of hypoxanthine to xanthine. Catalyzes the oxidation of xanthine to uric acid. This chain is Xanthine dehydrogenase (Xdh), found in Drosophila subobscura (Fruit fly).